The chain runs to 463 residues: Senescence/dehydration-associated protein At3g51250 (463 aa).

Basic and acidic residues predominate over residues 1–12 (MNPSHGGDDKQR). 3 disordered regions span residues 1–31 (MNPS…FAST), 52–74 (PNLF…PQAT), and 146–172 (IHPP…KSKS). Polar residues predominate over residues 19 to 31 (VDQSIPDNPFAST). In terms of domain architecture, Senescence spans 269-437 (IASGSGKLIR…AWVAFKIRKA (169 aa)).

This chain is Senescence/dehydration-associated protein At3g51250, found in Arabidopsis thaliana (Mouse-ear cress).